A 413-amino-acid chain; its full sequence is Prophage integrase IntA (413 aa).

The Core-binding (CB) domain maps to 105 to 186 (NTFLLVAERW…RINEVMIYAQ (82 aa)). In terms of domain architecture, Tyr recombinase spans 209 to 386 (KNMPSIRPDQ…DYLEQRRPMM (178 aa)). Catalysis depends on residues Arg-248, Lys-275, His-337, Arg-340, and His-363. Tyr-373 (O-(3'-phospho-DNA)-tyrosine intermediate) is an active-site residue.

The protein belongs to the 'phage' integrase family.

Functionally, integrase is necessary for integration of the phage into the host genome by site-specific recombination. In conjunction with excisionase, integrase is also necessary for excision of the prophage from the host genome. Part of the cryptic P4-like prophage CP4-57, it excises the prophage when overexpressed, which also requires integration host factor (encoded by ihfA and ihfB). Overexpression of AlpA leads to excision of the CP4-57 prophage, which inactivates ssrA (the gene upstream of the prophage) that encodes tmRNA which is required to rescue stalled ribosomes in a process known as trans-translation. The protein is Prophage integrase IntA (intA) of Escherichia coli (strain K12).